The primary structure comprises 37 residues: Cytochrome b6-f complex subunit 7 (37 aa).

Residues 11-29 traverse the membrane as a helical segment; the sequence is AILSIVLVLVGLAWGFLLL.

Belongs to the PetM family. As to quaternary structure, the 4 large subunits of the cytochrome b6-f complex are cytochrome b6, subunit IV (17 kDa polypeptide, PetD), cytochrome f and the Rieske protein, while the 4 small subunits are PetG, PetL, PetM and PetN. The complex functions as a dimer.

The protein localises to the cellular thylakoid membrane. Functionally, component of the cytochrome b6-f complex, which mediates electron transfer between photosystem II (PSII) and photosystem I (PSI), cyclic electron flow around PSI, and state transitions. This is Cytochrome b6-f complex subunit 7 from Gloeothece citriformis (strain PCC 7424) (Cyanothece sp. (strain PCC 7424)).